The sequence spans 257 residues: Small ribosomal subunit protein uS3 (257 aa).

In terms of domain architecture, KH type-2 spans 40-110; sequence IRKYLSTKYK…LVSLKVVEVQ (71 aa). Positions 223-257 are disordered; it reads ANKEFSRSSKPKKGSFNRSSRSKNTKPAPKQAVSE. Residues 231–246 show a composition bias toward basic residues; it reads SKPKKGSFNRSSRSKN.

This sequence belongs to the universal ribosomal protein uS3 family. Part of the 30S ribosomal subunit. Forms a tight complex with proteins S10 and S14.

Binds the lower part of the 30S subunit head. Binds mRNA in the 70S ribosome, positioning it for translation. The polypeptide is Small ribosomal subunit protein uS3 (Ureaplasma parvum serovar 3 (strain ATCC 27815 / 27 / NCTC 11736)).